Consider the following 702-residue polypeptide: MADS-box MEF2 type transcription factor MIG1 (702 aa).

An MADS-box domain is found at 1 to 61 (MGRRKIEIKA…KKLYEYSSGD (61 aa)). Disordered stretches follow at residues 73-608 (GGAT…NIDT) and 658-702 (PSFL…KVDS). Over residues 86 to 96 (GGDDDDEEEGD) the composition is skewed to acidic residues. Residues 132 to 144 (ASPPIPNGVPFPP) are compositionally biased toward pro residues. The span at 145–155 (HGHGVPRGHTP) shows a compositional bias: low complexity. Polar residues predominate over residues 180–195 (GSPQVNGFGFGQQQSM). Residues 201–241 (TTMPPHMPPQMAPGPPFPYPQHPQHPPHPPHPPHPPHPQQP) are compositionally biased toward pro residues. Low complexity-rich tracts occupy residues 273–284 (PMGMQRHSVSPP), 326–343 (ESPQQIEPPQHQHQQQPE), and 350–371 (EQQQQQQQSQQSQQPQEPQSEP). Over residues 456-465 (VDESTSNASE) the composition is skewed to polar residues. Low complexity-rich tracts occupy residues 487–512 (RASISSVSSAPESAPAPPSRSNSLRA) and 530–553 (DGSGSATAESASSAQGGASTDATS). Residues 554-567 (QSTRQNDSHSSTNM) are compositionally biased toward polar residues. Residues 587–600 (PPNPFAPKRPPQHP) are compositionally biased toward pro residues. A compositionally biased stretch (basic and acidic residues) spans 693–702 (NEPKRVKVDS).

Belongs to the MEF2 family. As to quaternary structure, interacts with MAPK MPS1.

The protein resides in the nucleus. Its function is as follows. Transcription factor acting downstream of the MPS1 MAP kinase (MAPK) cascade during conidiation and plant infection. Required for overcoming plant defense responses and the differentiation of secondary infectious hyphae in live plant cells. This is MADS-box MEF2 type transcription factor MIG1 from Pyricularia oryzae (Rice blast fungus).